The chain runs to 393 residues: S-adenosylmethionine sensor upstream of mTORC1 (393 aa).

Residues 1–35 form a disordered region; the sequence is MDLRSSAETDPDLSENHPGSVPAELQSRKQEQEKL. Position 94 (Arg94) interacts with S-adenosyl-L-methionine. The disordered stretch occupies residues 118–141; sequence DEKSARHATAGNANTDTNAPPQLS. The segment covering 125–136 has biased composition (low complexity); the sequence is ATAGNANTDTNA. The S-adenosyl-L-methionine site is built by Gly160, Asp178, Asp190, Phe191, and Ser232. The segment at 362–393 is disordered; it reads ELPETPYDSDSGESQSSSAPFYELEDPILLQS.

Belongs to the BMT2/SAMTOR family. Interacts with the GATOR1 complex; interaction is disrupted when samtor binds S-adenosyl-L-methionine. Interacts with the KICSTOR complex; interaction is disrupted when bmt2/samtor binds S-adenosyl-L-methionine.

S-adenosyl-L-methionine-binding protein that acts as an inhibitor of mTORC1 signaling via interaction with the GATOR1 and KICSTOR complexes. Acts as a sensor of S-adenosyl-L-methionine to signal methionine sufficiency to mTORC1: in presence of methionine, binds S-adenosyl-L-methionine, leading to disrupt interaction with the GATOR1 and KICSTOR complexes and promote mTORC1 signaling. Upon methionine starvation, S-adenosyl-L-methionine levels are reduced, thereby promoting the association with GATOR1 and KICSTOR, leading to inhibit mTORC1 signaling. Probably also acts as a S-adenosyl-L-methionine-dependent methyltransferase. This chain is S-adenosylmethionine sensor upstream of mTORC1, found in Danio rerio (Zebrafish).